Consider the following 252-residue polypeptide: Trans-aconitate 2-methyltransferase (252 aa).

This sequence belongs to the methyltransferase superfamily. Tam family.

The protein resides in the cytoplasm. It catalyses the reaction trans-aconitate + S-adenosyl-L-methionine = (E)-3-(methoxycarbonyl)pent-2-enedioate + S-adenosyl-L-homocysteine. Catalyzes the S-adenosylmethionine monomethyl esterification of trans-aconitate. The chain is Trans-aconitate 2-methyltransferase from Escherichia coli O9:H4 (strain HS).